A 1145-amino-acid chain; its full sequence is Trafficking protein particle complex subunit 10 (1145 aa).

It belongs to the TMEM1 family. In terms of assembly, part of the multisubunit TRAPP (transport protein particle) complex. Interacts with Shal (via C-terminal dendritic targeting motif). In terms of tissue distribution, co-expressed with Shal in the nervous system.

The protein resides in the golgi apparatus. Its subcellular location is the cis-Golgi network. It is found in the cell projection. The protein localises to the dendrite. It localises to the perikaryon. Its function is as follows. May play a role in vesicular transport from endoplasmic reticulum to Golgi. Has a role in one of the several mechanisms underlying dendritic localization of Shal channels. In Drosophila melanogaster (Fruit fly), this protein is Trafficking protein particle complex subunit 10 (SIDL).